We begin with the raw amino-acid sequence, 291 residues long: NAD kinase (291 aa).

Asp-55 serves as the catalytic Proton acceptor. NAD(+) is bound by residues 55-56, Arg-60, 130-131, Asp-160, and 171-176; these read DG, NE, and TAYAFS.

This sequence belongs to the NAD kinase family. It depends on a divalent metal cation as a cofactor.

The protein resides in the cytoplasm. It carries out the reaction NAD(+) + ATP = ADP + NADP(+) + H(+). Involved in the regulation of the intracellular balance of NAD and NADP, and is a key enzyme in the biosynthesis of NADP. Catalyzes specifically the phosphorylation on 2'-hydroxyl of the adenosine moiety of NAD to yield NADP. This Corynebacterium glutamicum (strain ATCC 13032 / DSM 20300 / JCM 1318 / BCRC 11384 / CCUG 27702 / LMG 3730 / NBRC 12168 / NCIMB 10025 / NRRL B-2784 / 534) protein is NAD kinase.